The following is a 603-amino-acid chain: Insulin-like growth factor-binding protein complex acid labile subunit (603 aa).

An N-terminal signal peptide occupies residues 1-23; sequence MALRTGGPALVVLLAFWVALGPC. Positions 32–74 constitute an LRRNT domain; it reads ASADAEGPQCPVACTCSHDDYTDELSVFCSSKNLTHLPDDIPV. Disulfide bonds link cysteine 41–cysteine 47 and cysteine 45–cysteine 60. N-linked (GlcNAc...) asparagine glycans are attached at residues asparagine 64, asparagine 85, and asparagine 96. LRR repeat units lie at residues 75–96, 99–120, 123–144, 147–168, 171–192, 195–216, 219–240, 243–264, 267–288, 291–312, 315–336, 339–360, 363–384, 387–408, 411–432, 435–456, 459–480, 483–504, and 507–528; these read STRALWLDGNNLSSIPSAAFQN, SLDFLNLQGSWLRSLEPQALLG, NLYYLHLERNRLRNLAVGLFTH, SLASLSLSSNLLGRLEEGLFQG, HLWDLNLGWNSLVVLPDTVFQG, NLHELVLAGNKLTYLQPALFCG, ELRELDLSRNALRSVKANVFVH, RLQKLYLDRNLITAVAPGAFLG, ALRWLDLSHNRVAGLMEDTFPG, GLHVLRLAHNAIASLRPRTFKD, FLEELQLGHNRIRQLGERTFEG, QLEVLTLNDNQITEVRVGAFSG, NVAVMNLSGNCLRSLPERVFQG, KLHSLHLEHSCLGHVRLHTFAG, GLRRLFLRDNSISSIEEQSLAG, ELLELDLTTNRLTHLPRQLFQG, HLEYLLLSYNQLTTLSAEVLGP, RAFWLDISHNHLETLAEGLFSS, and RVRYLSLRNNSLQTFSPQPGLE. Asparagine 368 carries an N-linked (GlcNAc...) asparagine glycan. An N-linked (GlcNAc...) asparagine glycan is attached at asparagine 515. Residues 535–603 form the LRRCT domain; that stretch reads NPWDCSCPLK…DVSETHFVHC (69 aa). Cystine bridges form between cysteine 539-cysteine 581, cysteine 541-cysteine 603, and cysteine 565-cysteine 570. Asparagine 578 and asparagine 586 each carry an N-linked (GlcNAc...) asparagine glycan.

In terms of assembly, forms a ternary complex with IGF1 and IGFBP3. As to expression, brain, kidney, lung, heart, spleen, muscle and liver.

It is found in the secreted. The protein localises to the extracellular space. In terms of biological role, may have an important role in regulating the access of circulating IGFs to the tissues. The protein is Insulin-like growth factor-binding protein complex acid labile subunit (Igfals) of Rattus norvegicus (Rat).